We begin with the raw amino-acid sequence, 622 residues long: DNA-directed RNA polymerase subunit gamma (622 aa).

Residues C70, C72, C85, and C88 each contribute to the Zn(2+) site. Mg(2+) contacts are provided by D466, D468, and D470.

This sequence belongs to the RNA polymerase beta' chain family. RpoC1 subfamily. As to quaternary structure, in cyanobacteria the RNAP catalytic core is composed of 2 alpha, 1 beta, 1 beta', 1 gamma and 1 omega subunit. When a sigma factor is associated with the core the holoenzyme is formed, which can initiate transcription. Requires Mg(2+) as cofactor. Zn(2+) is required as a cofactor.

It catalyses the reaction RNA(n) + a ribonucleoside 5'-triphosphate = RNA(n+1) + diphosphate. Functionally, DNA-dependent RNA polymerase catalyzes the transcription of DNA into RNA using the four ribonucleoside triphosphates as substrates. This is DNA-directed RNA polymerase subunit gamma from Thermosynechococcus vestitus (strain NIES-2133 / IAM M-273 / BP-1).